The following is a 268-amino-acid chain: Phosphatidylglycerol--prolipoprotein diacylglyceryl transferase (268 aa).

The next 3 helical transmembrane spans lie at 16-36, 56-76, and 92-112; these read FITLRWYGLLIAVAVFIGIWL, IWLVVAAIPAARLYYVAFNWG, and GIAIHGAILGGIVAMAIFTYV. Position 136 (Arg136) interacts with a 1,2-diacyl-sn-glycero-3-phospho-(1'-sn-glycerol). The next 3 membrane-spanning stretches (helical) occupy residues 175 to 195, 204 to 224, and 236 to 256; these read PTFLYESLWNVGVFLLLLWLF, GTLLMVYAIAYSLGRFWIEGL, and IAQVVSLVAIALGSWGLFRLY.

The protein belongs to the Lgt family.

The protein resides in the cell inner membrane. The catalysed reaction is L-cysteinyl-[prolipoprotein] + a 1,2-diacyl-sn-glycero-3-phospho-(1'-sn-glycerol) = an S-1,2-diacyl-sn-glyceryl-L-cysteinyl-[prolipoprotein] + sn-glycerol 1-phosphate + H(+). It functions in the pathway protein modification; lipoprotein biosynthesis (diacylglyceryl transfer). Functionally, catalyzes the transfer of the diacylglyceryl group from phosphatidylglycerol to the sulfhydryl group of the N-terminal cysteine of a prolipoprotein, the first step in the formation of mature lipoproteins. This chain is Phosphatidylglycerol--prolipoprotein diacylglyceryl transferase, found in Thermosynechococcus vestitus (strain NIES-2133 / IAM M-273 / BP-1).